Consider the following 318-residue polypeptide: MNSKCHCVKLNDGHFIPVLGFGTAMPSELPKSKAKEVTKIAIDAGFHHFDSAFVYNTEDHVGEAIREKIANGTTRREDIFYTSKLWCTSLHPELVRSSLECSLKKLQLDYVDLYLIHFPMALKPGDENFPVDEHGKLLFDTVDLCATWEAMEKCKDAGLAKSIGVSNFNRRQLEKILNKPGLKYKPVCNQVECHLYLNQMKLLDFCKTNGIILVAYGVLGTQRYNGWVDQNSPVLLNEPVLSSMAKKYNQTPALIALRHQLQRGIVVLNTSLKEERIKENMKLSPEDMKVLDDLNRNLRYIAGGIFEGHPNFPFLDEY.

20-24 is a binding site for NADP(+); the sequence is GFGTA. Residue lysine 31 coordinates substrate. Aspartate 50 is an NADP(+) binding site. Catalysis depends on tyrosine 55, which acts as the Proton donor. Histidine 117 serves as a coordination point for substrate. Residues 166–167, glutamine 190, 216–224, and 270–280 each bind NADP(+); these read SN, YGVLGTQRY, and TSLKEERIKEN.

It belongs to the aldo/keto reductase family. As to quaternary structure, monomer.

Its subcellular location is the cytoplasm. The enzyme catalyses androsterone + NADP(+) = 5alpha-androstan-3,17-dione + NADPH + H(+). It carries out the reaction androsterone + NAD(+) = 5alpha-androstan-3,17-dione + NADH + H(+). In terms of biological role, NADP-dependent 17-alpha-hydroxysteroid dehydrogenase that converts 5-alpha-androstane-3,17-dione into androsterone. Has lower 3-alpha-hydroxysteroid dehydrogenase activity. Has broad substrate specificity and acts on various 17-alpha-hydroxysteroids, 17-ketosteroids, 3-alpha hydroxysteroids and 3-ketosteroids. Reduction of keto groups is strictly stereoselective. Reduction of 17-ketosteroids yields only 17-alpha-hydroxysteroids. Likewise, reduction of 3-ketosteroids yields only 3-alpha-hydroxysteroids. The polypeptide is Aldo-keto reductase family 1 member C21 (Akr1c21) (Rattus norvegicus (Rat)).